The following is a 146-amino-acid chain: Hemoglobin subunit beta (146 aa).

Valine 1 bears the N-acetylvaline mark. A Globin domain is found at 2–146; sequence ELTAEEKAAV…VANALAHKYH (145 aa). Residue serine 44 is modified to Phosphoserine. Lysine 59 bears the N6-acetyllysine mark. Histidine 63 lines the heme b pocket. Position 82 is an N6-acetyllysine (lysine 82). Histidine 92 provides a ligand contact to heme b. At cysteine 93 the chain carries S-nitrosocysteine. The residue at position 144 (lysine 144) is an N6-acetyllysine.

The protein belongs to the globin family. Heterotetramer of two alpha chains and two beta chains. As to expression, red blood cells.

Functionally, involved in oxygen transport from the lung to the various peripheral tissues. In Ceratotherium simum (White rhinoceros), this protein is Hemoglobin subunit beta (HBB).